Here is a 307-residue protein sequence, read N- to C-terminus: Golgi to ER traffic protein 2 (307 aa).

Residues 1–173 (MSDSTDSPAV…QAYDTYQQKL (173 aa)) are Cytoplasmic-facing. Polar residues predominate over residues 41 to 52 (LSQGSSVKTTGV). Residues 41-73 (LSQGSSVKTTGVKSVLDEPQPTATSSAIHDEDP) form a disordered region. Residues 174 to 194 (WKSRFLVIRVVVTLFNFFYHY) traverse the membrane as a helical segment. The Lumenal portion of the chain corresponds to 195–220 (LNVPSFHASNYSYVRDLAQDEFPVRN). A helical transmembrane segment spans residues 221-240 (FFTWFAAFEVIIVLQYYTVF). Residues 241–284 (HKLGLFHAANQNSMIMKLMSMGSMVLPQLNTYQPLVARFLGYYE) lie on the Cytoplasmic side of the membrane. Residues 285–305 (LFGIIFGDLSLVIVLFGLLSF) traverse the membrane as a helical segment. The Lumenal portion of the chain corresponds to 306-307 (TK).

It belongs to the GET2 family. As to quaternary structure, component of the Golgi to ER traffic (GET) complex, which is composed of GET1, GET2 and GET3. Within the complex, GET1 and GET2 form a heterotetramer which is stabilized by phosphatidylinositol binding and which binds to the GET3 homodimer.

Its subcellular location is the endoplasmic reticulum membrane. The protein localises to the golgi apparatus membrane. Its function is as follows. Required for the post-translational delivery of tail-anchored (TA) proteins to the endoplasmic reticulum. Together with GET1, acts as a membrane receptor for soluble GET3, which recognizes and selectively binds the transmembrane domain of TA proteins in the cytosol. The GET complex cooperates with the HDEL receptor ERD2 to mediate the ATP-dependent retrieval of resident ER proteins that contain a C-terminal H-D-E-L retention signal from the Golgi to the ER. This Candida tropicalis (strain ATCC MYA-3404 / T1) (Yeast) protein is Golgi to ER traffic protein 2.